A 226-amino-acid chain; its full sequence is Putative mitochondrial outer membrane protein porin 5 (226 aa).

This sequence belongs to the eukaryotic mitochondrial porin (TC 1.B.8.1) family.

It localises to the mitochondrion outer membrane. In terms of biological role, putative channel that allows diffusion of small hydrophilic molecules through membranes. This is Putative mitochondrial outer membrane protein porin 5 (VDAC5) from Arabidopsis thaliana (Mouse-ear cress).